Reading from the N-terminus, the 985-residue chain is UPF0182 protein cgR_0895 (985 aa).

A run of 7 helical transmembrane segments spans residues Val-19–Phe-39, Ile-63–Phe-83, Val-115–Trp-135, Ser-176–Ile-196, Thr-215–Asp-235, Lys-262–Leu-282, and Leu-290–Leu-310. A disordered region spans residues Ala-906–Glu-944. The segment covering Asp-929–Pro-939 has biased composition (low complexity).

The protein belongs to the UPF0182 family.

Its subcellular location is the cell membrane. This Corynebacterium glutamicum (strain R) protein is UPF0182 protein cgR_0895.